Consider the following 419-residue polypeptide: Adenylosuccinate synthetase 1 (419 aa).

11 to 17 (GDEGKGK) is a binding site for GTP. Asp12 functions as the Proton acceptor in the catalytic mechanism. Asp12 and Gly39 together coordinate Mg(2+). IMP-binding positions include 12–15 (DEGK), 37–40 (NAGH), Arg138, Gln220, and Arg298. The active-site Proton donor is the His40. Residue 294–300 (TVSKRPR) coordinates substrate. Residues Arg300, 326-328 (NVD), and 407-409 (SYG) contribute to the GTP site.

It belongs to the adenylosuccinate synthetase family. In terms of assembly, homodimer. Mg(2+) is required as a cofactor.

It is found in the cytoplasm. The catalysed reaction is IMP + L-aspartate + GTP = N(6)-(1,2-dicarboxyethyl)-AMP + GDP + phosphate + 2 H(+). It functions in the pathway purine metabolism; AMP biosynthesis via de novo pathway; AMP from IMP: step 1/2. Plays an important role in the de novo pathway of purine nucleotide biosynthesis. Catalyzes the first committed step in the biosynthesis of AMP from IMP. The sequence is that of Adenylosuccinate synthetase 1 from Photorhabdus laumondii subsp. laumondii (strain DSM 15139 / CIP 105565 / TT01) (Photorhabdus luminescens subsp. laumondii).